A 134-amino-acid polypeptide reads, in one-letter code: Profilin-2 (134 aa).

A disulfide bond links C13 and C118. Residues A84 to T100 carry the Involved in PIP2 interaction motif. T114 carries the post-translational modification Phosphothreonine.

It belongs to the profilin family. In terms of assembly, occurs in many kinds of cells as a complex with monomeric actin in a 1:1 ratio. In terms of processing, phosphorylated by MAP kinases.

It localises to the cytoplasm. It is found in the cytoskeleton. Functionally, binds to actin and affects the structure of the cytoskeleton. At high concentrations, profilin prevents the polymerization of actin, whereas it enhances it at low concentrations. In Olea europaea (Common olive), this protein is Profilin-2.